A 158-amino-acid chain; its full sequence is 6,7-dimethyl-8-ribityllumazine synthase (158 aa).

Residues Phe-22, 56–58, and 80–82 each bind 5-amino-6-(D-ribitylamino)uracil; these read ALE and VVI. 85–86 lines the (2S)-2-hydroxy-3-oxobutyl phosphate pocket; that stretch reads ET. The active-site Proton donor is the His-88. Asn-113 is a binding site for 5-amino-6-(D-ribitylamino)uracil. Residue Arg-127 participates in (2S)-2-hydroxy-3-oxobutyl phosphate binding.

It belongs to the DMRL synthase family.

It carries out the reaction (2S)-2-hydroxy-3-oxobutyl phosphate + 5-amino-6-(D-ribitylamino)uracil = 6,7-dimethyl-8-(1-D-ribityl)lumazine + phosphate + 2 H2O + H(+). It functions in the pathway cofactor biosynthesis; riboflavin biosynthesis; riboflavin from 2-hydroxy-3-oxobutyl phosphate and 5-amino-6-(D-ribitylamino)uracil: step 1/2. In terms of biological role, catalyzes the formation of 6,7-dimethyl-8-ribityllumazine by condensation of 5-amino-6-(D-ribitylamino)uracil with 3,4-dihydroxy-2-butanone 4-phosphate. This is the penultimate step in the biosynthesis of riboflavin. The protein is 6,7-dimethyl-8-ribityllumazine synthase of Neisseria gonorrhoeae (strain ATCC 700825 / FA 1090).